A 228-amino-acid polypeptide reads, in one-letter code: ATP-dependent dethiobiotin synthetase BioD 1 (228 aa).

13–18 lines the ATP pocket; it reads EVGKTV. Mg(2+) is bound at residue T17. K38 is a catalytic residue. S42 provides a ligand contact to substrate. ATP is bound by residues D55, 116 to 119, 176 to 177, and 205 to 207; these read EGAG, ND, and PWL. Mg(2+) contacts are provided by D55 and E116.

Belongs to the dethiobiotin synthetase family. In terms of assembly, homodimer. Requires Mg(2+) as cofactor.

The protein localises to the cytoplasm. It carries out the reaction (7R,8S)-7,8-diammoniononanoate + CO2 + ATP = (4R,5S)-dethiobiotin + ADP + phosphate + 3 H(+). Its pathway is cofactor biosynthesis; biotin biosynthesis; biotin from 7,8-diaminononanoate: step 1/2. Its function is as follows. Catalyzes a mechanistically unusual reaction, the ATP-dependent insertion of CO2 between the N7 and N8 nitrogen atoms of 7,8-diaminopelargonic acid (DAPA, also called 7,8-diammoniononanoate) to form a ureido ring. This Salmonella typhimurium (strain LT2 / SGSC1412 / ATCC 700720) protein is ATP-dependent dethiobiotin synthetase BioD 1.